We begin with the raw amino-acid sequence, 812 residues long: Toll-like receptor 10 (812 aa).

Positions 1–19 are cleaved as a signal peptide; it reads MRYIRSIYIFCSIVTSVRS. The Extracellular segment spans residues 20–577; the sequence is GASELPEERE…VHLPEISCNT (558 aa). LRR repeat units follow at residues 24 to 46, 49 to 70, 73 to 94, 97 to 118, and 119 to 139; these read LPEERELTTNFSSMSLTKVPEGL, ITTTLDLSYNLLFQLQHSDFRS, KLKVLILCHNRIQELDIKTFEF, ELSYLDVSNNRLKSVTWFSLAG, and LRHLDLSFNDFDTLPISVETG. An N-linked (GlcNAc...) asparagine glycan is attached at Asn33. N-linked (GlcNAc...) asparagine glycosylation occurs at Asn140. One copy of the LRR 6 repeat lies at 143–166; the sequence is HLETLGLSGAKIQKSDFQKIAHLQ. Asn189 carries an N-linked (GlcNAc...) asparagine glycan. 4 LRR repeats span residues 296–321, 325–348, 350–373, and 374–395; these read SNTVMRTIKLEHVHFRIFNIPQESIY, TKMDIENLTISDAQMPHMLFPMYP, RFQYLNFANNILTDDVFKKSIQLP, and HLKTLILKDNKLETLSLVSHFA. N-linked (GlcNAc...) asparagine glycosylation occurs at Asn331. Asn397 carries N-linked (GlcNAc...) asparagine glycosylation. LRR repeat units follow at residues 399–420, 423–443, 445–467, 468–489, and 490–510; these read SLRHLDLSENLLQHENDENCLW, TLVTMNLSFNKFADSVFGCLP, NIQILDLNSNKIQTVPKAITHLT, SLRELNLAFNFLTDLPGCSHFR, and RLLVLNVEMNLILSSSLDFFQ. Asn428 carries N-linked (GlcNAc...) asparagine glycosylation. One can recognise an LRRCT domain in the interval 523–577; it reads NPFRCTCELRDFIQLGKYSEGMMVGWSDSYICEYPLNLKGTQLKDVHLPEISCNT. The chain crosses the membrane as a helical span at residues 578 to 598; the sequence is GLLIVTIVVVMLVLGMAVAFC. Topologically, residues 599 to 812 are cytoplasmic; it reads CLHFDLPWYL…AISLIRTDCL (214 aa). The 144-residue stretch at 633-776 folds into the TIR domain; that stretch reads VQFHVFISYS…LFWANLRAAL (144 aa).

This sequence belongs to the Toll-like receptor family. In terms of assembly, binds MYD88 via their respective TIR domains.

The protein resides in the membrane. Its function is as follows. Participates in the innate immune response to microbial agents. Acts via MYD88 and TRAF6, leading to NF-kappa-B activation, cytokine secretion and the inflammatory response. The polypeptide is Toll-like receptor 10 (TLR10) (Bos taurus (Bovine)).